Reading from the N-terminus, the 292-residue chain is Sulfofructosephosphate aldolase (292 aa).

K193 functions as the Schiff-base intermediate with substrate in the catalytic mechanism.

This sequence belongs to the aldolase LacD family. As to quaternary structure, homotetramer.

It catalyses the reaction 6-deoxy-6-sulfo-D-fructose 1-phosphate = (2S)-3-sulfolactaldehyde + dihydroxyacetone phosphate. In terms of biological role, cleaves 6-deoxy-6-sulfo-D-fructose 1-phosphate (SFP) to form dihydroxyacetone phosphate (DHAP) and 3-sulfolactaldehyde (SLA). This chain is Sulfofructosephosphate aldolase (yihT), found in Escherichia coli (strain K12).